We begin with the raw amino-acid sequence, 626 residues long: Probable potassium transport system protein Kup (626 aa).

13 helical membrane-spanning segments follow: residues 8-28 (VALP…IGTS), 44-64 (ISEA…TLSI), 102-122 (IYLI…GIIT), 139-159 (PAFD…LFMV), 171-191 (FGPI…YSII), 196-216 (ILWF…PFVA), 217-237 (FVAM…YADM), 249-269 (WFIV…ALLL), 281-301 (LLVP…AAVI), 339-359 (IYVP…IILF), 377-397 (MLCV…WPWW), 399-419 (VTLF…STSL), and 421-441 (ILSG…ILMT).

It belongs to the HAK/KUP transporter (TC 2.A.72) family.

It is found in the cell inner membrane. It catalyses the reaction K(+)(in) + H(+)(in) = K(+)(out) + H(+)(out). Transport of potassium into the cell. Likely operates as a K(+):H(+) symporter. The protein is Probable potassium transport system protein Kup of Acinetobacter baylyi (strain ATCC 33305 / BD413 / ADP1).